The chain runs to 551 residues: PA-phosphatase related-family protein DDB_G0268928 (551 aa).

2 stretches are compositionally biased toward polar residues: residues 26-47 and 137-152; these read TESL…SGKD and KYNT…SSNK. Disordered stretches follow at residues 26 to 50 and 123 to 172; these read TESL…DYSS and KGED…NNNN. Residues 153-171 are compositionally biased toward low complexity; the sequence is TQTTVLNNSTTSSNNINNN. 7 helical membrane passes run 211–231, 232–252, 273–293, 346–366, 393–413, 474–494, and 500–520; these read SYSD…SIIY, SLLV…LVFI, LAVG…AVVL, ILQL…IYIL, MFIC…LIFP, ILPA…IATM, and YFVD…YGGF.

It belongs to the PA-phosphatase related phosphoesterase family.

The protein resides in the membrane. The protein is PA-phosphatase related-family protein DDB_G0268928 of Dictyostelium discoideum (Social amoeba).